The chain runs to 571 residues: PR domain zinc finger protein 14 (571 aa).

Residue Ser79 is modified to Phosphoserine. A disordered region spans residues 129–191 (LGHQIIGGDN…PKPSNQEGKS (63 aa)). The segment covering 165–176 (RTSQLLPCSPSK) has biased composition (polar residues). The tract at residues 194-384 (RFQFTEEDLH…DIPVSLQVTE (191 aa)) is interaction with CBFA2T2. Positions 251–367 (EGLCLMQTVF…QNQELLVWYG (117 aa)) constitute an SET domain. The C2H2-type 1; atypical zinc finger occupies 400–424 (YRCERCGKVFTYKYYRDKHLKYTPC). 5 C2H2-type zinc fingers span residues 432-455 (FPCS…LHVH), 461-483 (HKCS…MRVH), 489-511 (YQCV…IRQH), 517-540 (FKCK…RRSH), and 546-568 (CSCS…MKFH).

Belongs to the class V-like SAM-binding methyltransferase superfamily. As to quaternary structure, interacts with CBFA2T2. As to expression, expressed in embryonic stem cells. Tends to be overexpressed in breast cancer (at protein level).

The protein resides in the nucleus. In terms of biological role, transcription factor that has both positive and negative roles on transcription. Required for the maintenance of embryonic stem cell identity and the reacquisition of pluripotency in somatic cells. May play an essential role in germ cell development at 2 levels: the reacquisition of potential pluripotency, including SOX2 up-regulation, and successful epigenetic reprogramming, characterized by EHMT1 repression. Its association with CBFA2T2 is required for the functions in pluripotency and germ cell formation. Directly up-regulates the expression of pluripotency gene POU5F1 through its proximal enhancer. Binds to the DNA consensus sequence 5'-GGTC[TC]CTAA-3'. This Homo sapiens (Human) protein is PR domain zinc finger protein 14 (PRDM14).